The chain runs to 437 residues: UDP-N-acetylmuramate--L-alanine ligase (437 aa).

ATP is bound at residue 108 to 114; sequence GAHGKTS.

This sequence belongs to the MurCDEF family.

It localises to the cytoplasm. The enzyme catalyses UDP-N-acetyl-alpha-D-muramate + L-alanine + ATP = UDP-N-acetyl-alpha-D-muramoyl-L-alanine + ADP + phosphate + H(+). It functions in the pathway cell wall biogenesis; peptidoglycan biosynthesis. Functionally, cell wall formation. The protein is UDP-N-acetylmuramate--L-alanine ligase of Staphylococcus aureus (strain JH9).